A 66-amino-acid polypeptide reads, in one-letter code: U1-theraphotoxin-Cg1d 1 (66 aa).

Residues 1–21 (MKMSALFVIFGLALLFCNSFA) form the signal peptide. A propeptide spanning residues 22–29 (AELKATGR) is cleaved from the precursor. Cystine bridges form between C31/C46, C38/C51, and C45/C58. The residue at position 63 (P63) is a Proline amide.

Belongs to the neurotoxin 10 (Hwtx-1) family. 46 (Jztx-7/10/12) subfamily. In terms of tissue distribution, expressed by the venom gland.

The protein resides in the secreted. Probable ion channel inhibitor. The sequence is that of U1-theraphotoxin-Cg1d 1 from Chilobrachys guangxiensis (Chinese earth tiger tarantula).